Here is a 245-residue protein sequence, read N- to C-terminus: Polyhedrin (245 aa).

Belongs to the polyhedrin family.

Major component of the virus occlusion bodies, which are large proteinaceous structures (polyhedra), that protect the virus from the outside environment for extended periods until they are ingested by insect larvae. The chain is Polyhedrin from Lepidoptera (butterflies and moths).